A 134-amino-acid chain; its full sequence is Profilin-3 (134 aa).

Residues Cys13 and Cys118 are joined by a disulfide bond. An Involved in PIP2 interaction motif is present at residues 84–100 (AVIRGKKGSGGITIKKT). Thr114 carries the phosphothreonine modification.

Belongs to the profilin family. In terms of assembly, occurs in many kinds of cells as a complex with monomeric actin in a 1:1 ratio. Phosphorylated by MAP kinases.

The protein localises to the cytoplasm. Its subcellular location is the cytoskeleton. Its function is as follows. Binds to actin and affects the structure of the cytoskeleton. At high concentrations, profilin prevents the polymerization of actin, whereas it enhances it at low concentrations. This Olea europaea (Common olive) protein is Profilin-3.